The sequence spans 122 residues: uncharacterized protein (122 aa).

A compositionally biased stretch (polar residues) spans 79–90 (NERVTSRVTNSR). A disordered region spans residues 79 to 122 (NERVTSRVTNSRTESESNGNGNATGNTSSNANSNGNANGIYIRK). Positions 94-122 (ESNGNGNATGNTSSNANSNGNANGIYIRK) are enriched in low complexity.

This is an uncharacterized protein from Leptolyngbya boryana (Plectonema boryanum).